A 217-amino-acid chain; its full sequence is Uracil-DNA glycosylase (217 aa).

Asp62 acts as the Proton acceptor in catalysis.

It belongs to the uracil-DNA glycosylase (UDG) superfamily. UNG family.

It is found in the cytoplasm. It carries out the reaction Hydrolyzes single-stranded DNA or mismatched double-stranded DNA and polynucleotides, releasing free uracil.. Functionally, excises uracil residues from the DNA which can arise as a result of misincorporation of dUMP residues by DNA polymerase or due to deamination of cytosine. The sequence is that of Uracil-DNA glycosylase from Streptococcus mutans serotype c (strain ATCC 700610 / UA159).